The following is an 86-amino-acid chain: BaSO(4)-adsorbing protein 1 (86 aa).

Cystine bridges form between Cys6–Cys22, Cys18–Cys49, and Cys39–Cys54. Positions 58 to 86 (GDSASNTQNQGGSRRQENEDQGDDEWDRK) are disordered. Over residues 59–70 (DSASNTQNQGGS) the composition is skewed to polar residues. Residues 76-86 (EDQGDDEWDRK) are compositionally biased toward acidic residues.

In terms of tissue distribution, salivary gland (at protein level).

Its subcellular location is the secreted. In terms of biological role, inhibits lectin and classical pathways of complement system activation in the host with no significant effect on the alternative pathway. Inhibits host extrinsic blood coagulation pathway but not the intrinsic cascade. Binds to neutral and negatively charged membranes in vitro; binding is reduced upon pre-incubation with Ca(2+). The sequence is that of BaSO(4)-adsorbing protein 1 from Ornithodoros savignyi (African eyed tampan).